Reading from the N-terminus, the 3084-residue chain is Highly reducing polyketide synthase sdnO (3084 aa).

The region spanning 4 to 430 (PIPLAVVGIA…GTNAHAVLEK (427 aa)) is the Ketosynthase family 3 (KS3) domain. Residues C178, H313, and H353 each act as for beta-ketoacyl synthase activity in the active site. The tract at residues 541–841 (FIFTGQGAQW…LAGPLRQSVA (301 aa)) is malonyl-CoA:ACP transacylase (MAT) domain. The active-site For malonyltransferase activity is the S632. Residues 931-1071 (HDLLGLRMTD…GSVLIDLVSS (141 aa)) form an N-terminal hotdog fold region. The segment at 931-1243 (HDLLGLRMTD…RSAEADMLVF (313 aa)) is dehydratase (DH) domain. One can recognise a PKS/mFAS DH domain in the interval 931-1275 (HDLLGLRMTD…LRSLAALDGA (345 aa)). The Proton acceptor; for dehydratase activity role is filled by H963. The tract at residues 1099–1275 (LQPGEDIPPS…LRSLAALDGA (177 aa)) is C-terminal hotdog fold. The active-site Proton donor; for dehydratase activity is the D1177. The segment at 1733–2045 (GTAHAATFVE…RHENMTKYVV (313 aa)) is enoylreductase (ER) domain. The interval 2069-2252 (ATYVVAGGLG…YMALNIGLIE (184 aa)) is catalytic ketoreductase (KRc) domain. One can recognise a Carrier domain in the interval 2363–2440 (DIEAFAARAI…ALARKVTLRS (78 aa)). S2400 carries the O-(pantetheine 4'-phosphoryl)serine modification. Residues 2445–2501 (GGAGGDASSTGNSESMARTPSDSSTVPTSIPATPSRSPSREPPAKETLTKSQQHLPI) form a disordered region. Residues 2456 to 2481 (NSESMARTPSDSSTVPTSIPATPSRS) are compositionally biased toward polar residues. Residues 2482 to 2492 (PSREPPAKETL) are compositionally biased toward basic and acidic residues. The segment at 2864–3084 (HFYSQLNRAF…LGVVRRVVEG (221 aa)) is choline/carnitine acyltransferase domain.

The protein operates within antibiotic biosynthesis. In terms of biological role, highly reducing polyketide synthase; part of the gene cluster that mediates the biosynthesis of sordarin and hypoxysordarin, glycoside antibiotics with a unique tetracyclic diterpene aglycone structure. First, the geranylgeranyl diphosphate synthase sdnC constructs GGDP from farnesyl diphosphate and isopentenyl diphosphate. The diterpene cyclase sdnA then catalyzes the cyclization of GGDP to afford cycloaraneosene. Cycloaraneosene is then hydroxylated four times by the putative cytochrome P450 monooxygenases sdnB, sdnE, sdnF and sdnH to give a hydroxylated cycloaraneosene derivative such as cycloaraneosene-8,9,13,19-tetraol. Although the order of the hydroxylations is unclear, at least C8, C9 and C13 of the cycloaraneosene skeleton are hydroxylated before the sordaricin formation. Dehydration of the 13-hydroxy group of the hydroxylated cycloaraneosene derivative might be catalyzed by an unassigned hypothetical protein such as sdnG and sdnP to construct the cyclopentadiene moiety. The FAD-dependent oxidoreductase sdnN is proposed to catalyze the oxidation at C9 of the hydroxylated cycloaraneosene derivative and also catalyze the Baeyer-Villiger oxidation to give the lactone intermediate. The presumed lactone intermediate would be hydrolyzed to give an acrolein moiety and a carboxylate moiety. Then, [4+2]cycloaddition would occur between the acrolein moiety and the cyclopentadiene moiety to give sordaricin. SdnN might also be involved in the [4+2]cycloaddition after the hypothesized oxidation to accommodate the oxidized product and prompt the [4+2]cycloaddition. GDP-6-deoxy-D-altrose may be biosynthesized from GDP-D-mannose by the putative GDP-mannose-4,6-dehydratase sdnI and the short-chain dehydrogenase sdnK. The glycosyltransferase sdnJ catalyzes the attachment of 6-deoxy-D-altrose onto the 19-hydroxy group of sordaricin to give 4'-O-demethylsordarin. The methyltransferase sdnD would complete the biosynthesis of sordarin. Sordarin can be further modified into hypoxysordarin. The unique acyl chain at the 3'-hydroxy group of hypoxysordarin would be constructed by an iterative type I PKS sdnO and the trans-acting polyketide methyltransferase sdnL. SdnL would be responsible for the introduction of an alpha-methyl group of the polyketide chain. Alternatively, the putative beta-lactamase-like sdnR might be responsible for the cleavage and transfer of the polyketide chain from the PKS sdnO to sordarin. Two putative cytochrome P450 monooxygenases, sdnQ and sdnT, might catalyze the epoxidations of the polyketide chain to complete the biosynthesis of hypoxysordarin. Transcriptional regulators sdnM and sdnS are presumably encoded for the transcriptional regulation of the expression of the sdn gene cluster. The protein is Highly reducing polyketide synthase sdnO of Sordaria araneosa (Pleurage araneosa).